Reading from the N-terminus, the 580-residue chain is Alpha-thujene synthase, chloroplastic (580 aa).

A chloroplast-targeting transit peptide spans 1 to 32 (MALQLLTPSFSFQHSPSPHKLTTLRYTHHRIR). (2E)-geranyl diphosphate-binding residues include Arg-296, Asp-333, Asp-337, Arg-473, and Asp-476. Asp-333 and Asp-337 together coordinate Mg(2+). The short motif at 333–337 (DDVYD) is the DDXXD motif element. Mg(2+) is bound by residues Asp-476, Thr-480, and Glu-484.

Belongs to the terpene synthase family. Tpsb subfamily. In terms of assembly, monomer. Mg(2+) is required as a cofactor. Requires Mn(2+) as cofactor. In terms of tissue distribution, expressed in developing and mature fruits. Barely detectable in leaves and shoots.

It is found in the plastid. The protein localises to the chloroplast. The catalysed reaction is (2E)-geranyl diphosphate = alpha-thujene + diphosphate. It functions in the pathway secondary metabolite biosynthesis; terpenoid biosynthesis. Functionally, monoterpene synthase (TPS) involved in the biosynthesis of monoterpene natural products used by traditional Chinese medicine to treat headache, inflammation and intoxication. Catalyzes the conversion of (2E)-geranyl diphosphate (GPP) into alpha-thujene. This chain is Alpha-thujene synthase, chloroplastic, found in Litsea cubeba (Aromatic litsea).